The chain runs to 434 residues: Serine--tRNA ligase (434 aa).

Threonine 237 to glutamate 239 contributes to the L-serine binding site. Arginine 268–glutamate 270 lines the ATP pocket. Glutamate 291 is a binding site for L-serine. Glutamate 358–serine 361 is an ATP binding site. Serine 393 contributes to the L-serine binding site.

Belongs to the class-II aminoacyl-tRNA synthetase family. Type-1 seryl-tRNA synthetase subfamily. As to quaternary structure, homodimer. The tRNA molecule binds across the dimer.

It is found in the cytoplasm. It catalyses the reaction tRNA(Ser) + L-serine + ATP = L-seryl-tRNA(Ser) + AMP + diphosphate + H(+). The enzyme catalyses tRNA(Sec) + L-serine + ATP = L-seryl-tRNA(Sec) + AMP + diphosphate + H(+). It participates in aminoacyl-tRNA biosynthesis; selenocysteinyl-tRNA(Sec) biosynthesis; L-seryl-tRNA(Sec) from L-serine and tRNA(Sec): step 1/1. Its function is as follows. Catalyzes the attachment of serine to tRNA(Ser). Is also able to aminoacylate tRNA(Sec) with serine, to form the misacylated tRNA L-seryl-tRNA(Sec), which will be further converted into selenocysteinyl-tRNA(Sec). This chain is Serine--tRNA ligase, found in Rhodopseudomonas palustris (strain ATCC BAA-98 / CGA009).